We begin with the raw amino-acid sequence, 291 residues long: Probable cell wall amidase LytH (291 aa).

A signal peptide spans 1 to 40 (MKKIDSWLTKHGLKNRLTLVVIVIFIIFLILLFMFVNLSD). Residues 41–105 (EDTGQITITE…WVAGWHTNLN (65 aa)) enclose the SH3b domain. In terms of domain architecture, MurNAc-LAA spans 122-286 (IVLDPGHGGS…VEQAIVDGLK (165 aa)). Residues 123 to 147 (VLDPGHGGSDQGASSSTPSKSLEKN) form a disordered region. The segment covering 133–142 (QGASSSTPSK) has biased composition (polar residues).

It belongs to the N-acetylmuramoyl-L-alanine amidase 3 family.

The protein localises to the secreted. Probably involved in cell-wall metabolism. In Staphylococcus epidermidis (strain ATCC 12228 / FDA PCI 1200), this protein is Probable cell wall amidase LytH (lytH).